A 178-amino-acid chain; its full sequence is Translation initiation factor IF-3 (178 aa).

It belongs to the IF-3 family. As to quaternary structure, monomer.

The protein resides in the cytoplasm. Its function is as follows. IF-3 binds to the 30S ribosomal subunit and shifts the equilibrium between 70S ribosomes and their 50S and 30S subunits in favor of the free subunits, thus enhancing the availability of 30S subunits on which protein synthesis initiation begins. This is Translation initiation factor IF-3 from Picosynechococcus sp. (strain ATCC 27264 / PCC 7002 / PR-6) (Agmenellum quadruplicatum).